The chain runs to 339 residues: Cilia- and flagella-associated protein 36 (339 aa).

Coiled-coil stretches lie at residues 142–188 (ISDL…ENKQ) and 255–330 (NLSQ…EVIL). Disordered stretches follow at residues 177–212 (NLTL…EKQP) and 281–318 (KKQE…QRRK). A compositionally biased stretch (polar residues) spans 187–200 (KQSSGSERTPNNTE). Residues 281–313 (KKQESKKMAQNSEEHEEKATCSKQEMTEEEKKS) show a composition bias toward basic and acidic residues.

The protein belongs to the CFAP36 family.

Its subcellular location is the nucleus. The protein localises to the cytoplasm. The protein resides in the cell projection. It is found in the cilium. It localises to the flagellum. The polypeptide is Cilia- and flagella-associated protein 36 (Xenopus tropicalis (Western clawed frog)).